A 450-amino-acid polypeptide reads, in one-letter code: 23S rRNA (uracil(1939)-C(5))-methyltransferase RlmD (450 aa).

Positions 1 to 22 (MAKHDRGLRFQPAGGSRAPQIP) are disordered. Residues 20 to 78 (QIPVGKKQRLTIQRLANDGRGIAFVEGRTWFVSGALAGEEVEARVLGSHGKVVEARAER) form the TRAM domain. [4Fe-4S] cluster contacts are provided by Cys91, Cys97, Cys100, and Cys179. S-adenosyl-L-methionine is bound by residues Gln283, Phe312, Asn317, Glu333, Asp360, and Asp381. Cys407 acts as the Nucleophile in catalysis.

This sequence belongs to the class I-like SAM-binding methyltransferase superfamily. RNA M5U methyltransferase family. RlmD subfamily.

The catalysed reaction is uridine(1939) in 23S rRNA + S-adenosyl-L-methionine = 5-methyluridine(1939) in 23S rRNA + S-adenosyl-L-homocysteine + H(+). Its function is as follows. Catalyzes the formation of 5-methyl-uridine at position 1939 (m5U1939) in 23S rRNA. The chain is 23S rRNA (uracil(1939)-C(5))-methyltransferase RlmD from Pseudomonas fluorescens (strain ATCC BAA-477 / NRRL B-23932 / Pf-5).